The primary structure comprises 881 residues: Probable inorganic carbon transporter subunit DabA (881 aa).

Zn(2+) is bound by residues Cys-399, Asp-401, His-585, and Cys-600.

It belongs to the inorganic carbon transporter (TC 9.A.2) DabA family. Forms a complex with DabB. Requires Zn(2+) as cofactor.

Its subcellular location is the cell membrane. Functionally, part of an energy-coupled inorganic carbon pump. The protein is Probable inorganic carbon transporter subunit DabA of Geobacillus sp. (strain WCH70).